We begin with the raw amino-acid sequence, 141 residues long: Hemoglobin subunit alpha (141 aa).

The Globin domain maps to 1–141 (VLSSTDKSNV…VSTVLTSKYR (141 aa)). Serine 3 bears the Phosphoserine mark. N6-succinyllysine is present on residues lysine 7 and lysine 11. An N6-acetyllysine; alternate modification is found at lysine 16. Lysine 16 is subject to N6-succinyllysine; alternate. Tyrosine 24 is subject to Phosphotyrosine. The residue at position 35 (serine 35) is a Phosphoserine. Lysine 40 carries the N6-succinyllysine modification. Residue histidine 58 coordinates O2. Histidine 87 is a binding site for heme b. Position 102 is a phosphoserine (serine 102). Threonine 108 is modified (phosphothreonine). A phosphoserine mark is found at serine 124 and serine 131. A phosphothreonine mark is found at threonine 134 and threonine 137. Serine 138 is modified (phosphoserine).

The protein belongs to the globin family. Heterotetramer of two alpha chains and two beta chains. Red blood cells.

Its function is as follows. Involved in oxygen transport from the lung to the various peripheral tissues. Functionally, hemopressin acts as an antagonist peptide of the cannabinoid receptor CNR1. Hemopressin-binding efficiently blocks cannabinoid receptor CNR1 and subsequent signaling. The polypeptide is Hemoglobin subunit alpha (Pteropus vampyrus (Large flying fox)).